A 353-amino-acid chain; its full sequence is uncharacterized protein (353 aa).

The first 18 residues, 1–18 (MKFVLFAQLAAVAAPAIA), serve as a signal peptide directing secretion. Residues 94 to 119 (EGGNVRRVPGGPSQSARQIGDSSTPM) form a disordered region. Polar residues predominate over residues 105-119 (PSQSARQIGDSSTPM). 2 N-linked (GlcNAc...) asparagine glycosylation sites follow: Asn-165 and Asn-312.

Belongs to the glycosyl hydrolase 3 family.

Its subcellular location is the secreted. This is an uncharacterized protein from Arthroderma benhamiae (strain ATCC MYA-4681 / CBS 112371) (Trichophyton mentagrophytes).